The sequence spans 189 residues: MAPAWSLLLALLLLSCNAICSLGCHLPHSHSLAKRRVLTLLRQLRRVSPSSCLQDRNDFAFPQEALGGSQLQKAQAISVLHEVTQHTFQLSSTEGSAAVWDESLLDKLRTALDQQLTDLQACLRQEEGLPGAPLLKEDSSLAVRKYFHRLTLYLQEKRHSPCAWEVVRAQVMRAFSSSTNLQERFRRKD.

An N-terminal signal peptide occupies residues 1 to 23 (MAPAWSLLLALLLLSCNAICSLG). Disulfide bonds link C24/C122 and C52/C162.

This sequence belongs to the alpha/beta interferon family.

Its subcellular location is the secreted. Functionally, produced by macrophages, IFN-alpha have antiviral activities. Interferon stimulates the production of two enzymes: a protein kinase and an oligoadenylate synthetase. This Bos taurus (Bovine) protein is Interferon alpha-D (IFNAD).